The primary structure comprises 379 residues: MKVDFLVIKVEKLSSLRVFYFFLFFFESKYVEDQKIKDAKLLQLDFDTIRLATNDFSPYNHLGEGGFGAVYKGVLDSGEEIAVKRLSMKSGQGDNEFVNEVSLVAKLQHRNLVRLLGFCFKGEERLLIYEFFKNTSLEKFIFDSDRRMILDWEKRYRIISGVARGLLYLHEDSHFKIIHRDMKASNVLLDDAMNPKIADFGMVKLFNTDQTSQTMFTSKVAGTYGYMAPEYAMSGQFSVKTDVFSFGVLVLEIIKGKKNNWSPEEQSSLFLLSYVWKCWREGEVLNIVDPSLIETRGLSDEIRKCIHIGLLCVQENPGSRPTMASIVRMLNANSFTLPRPLQPAFYSGVVDSSSRDNNHTRNPRIASLNDVTITELDPR.

Positions 56–336 constitute a Protein kinase domain; sequence FSPYNHLGEG…VRMLNANSFT (281 aa). ATP is bound by residues 62–70 and Lys-84; that span reads LGEGGFGAV. Tyr-129 bears the Phosphotyrosine mark. The active-site Proton acceptor is Asp-181. Residue Ser-185 is modified to Phosphoserine. Thr-223 is subject to Phosphothreonine. Tyr-231 carries the phosphotyrosine modification.

This sequence belongs to the protein kinase superfamily. Ser/Thr protein kinase family. CRK subfamily.

The enzyme catalyses L-seryl-[protein] + ATP = O-phospho-L-seryl-[protein] + ADP + H(+). It catalyses the reaction L-threonyl-[protein] + ATP = O-phospho-L-threonyl-[protein] + ADP + H(+). The polypeptide is Cysteine-rich receptor-like protein kinase 44 (Arabidopsis thaliana (Mouse-ear cress)).